Consider the following 396-residue polypeptide: ATP-dependent RNA helicase eIF4A (396 aa).

The disordered stretch occupies residues 1-20; that stretch reads MADKGLEDVPEGQIESNYDE. A Q motif motif is present at residues 23 to 51; the sequence is DSFDAMNLKAELLRGVYAYGFERPSAIQQ. One can recognise a Helicase ATP-binding domain in the interval 54 to 224; sequence IMPVIKGHDV…TKFMRDPVRI (171 aa). 67–74 lines the ATP pocket; the sequence is AQSGTGKT. The DEAD box signature appears at 172–175; sequence DEAD. The 162-residue stretch at 235 to 396 folds into the Helicase C-terminal domain; that stretch reads GIKQFYIAVE…EMPMNVADLI (162 aa).

Belongs to the DEAD box helicase family. eIF4A subfamily. As to quaternary structure, component of the eIF4F complex, which composition varies with external and internal environmental conditions. It is composed of at least eIF4A, eIF4E and eIF4G.

The protein localises to the cytoplasm. The enzyme catalyses ATP + H2O = ADP + phosphate + H(+). In terms of biological role, ATP-dependent RNA helicase which is a subunit of the eIF4F complex involved in cap recognition and is required for mRNA binding to ribosome. In the current model of translation initiation, eIF4A unwinds RNA secondary structures in the 5'-UTR of mRNAs which is necessary to allow efficient binding of the small ribosomal subunit, and subsequent scanning for the initiator codon. The protein is ATP-dependent RNA helicase eIF4A (TIF1) of Phaeosphaeria nodorum (strain SN15 / ATCC MYA-4574 / FGSC 10173) (Glume blotch fungus).